We begin with the raw amino-acid sequence, 238 residues long: 1-(5-phosphoribosyl)-5-[(5-phosphoribosylamino)methylideneamino] imidazole-4-carboxamide isomerase (238 aa).

The Proton acceptor role is filled by Asp8. Residue Asp129 is the Proton donor of the active site.

Belongs to the HisA/HisF family.

It localises to the cytoplasm. The catalysed reaction is 1-(5-phospho-beta-D-ribosyl)-5-[(5-phospho-beta-D-ribosylamino)methylideneamino]imidazole-4-carboxamide = 5-[(5-phospho-1-deoxy-D-ribulos-1-ylimino)methylamino]-1-(5-phospho-beta-D-ribosyl)imidazole-4-carboxamide. It functions in the pathway amino-acid biosynthesis; L-histidine biosynthesis; L-histidine from 5-phospho-alpha-D-ribose 1-diphosphate: step 4/9. This chain is 1-(5-phosphoribosyl)-5-[(5-phosphoribosylamino)methylideneamino] imidazole-4-carboxamide isomerase, found in Brachyspira hyodysenteriae (strain ATCC 49526 / WA1).